A 243-amino-acid chain; its full sequence is Ubiquinone/menaquinone biosynthesis C-methyltransferase UbiE (243 aa).

S-adenosyl-L-methionine is bound by residues T69, D90, and 116 to 117 (DA).

It belongs to the class I-like SAM-binding methyltransferase superfamily. MenG/UbiE family.

The enzyme catalyses a 2-demethylmenaquinol + S-adenosyl-L-methionine = a menaquinol + S-adenosyl-L-homocysteine + H(+). It catalyses the reaction a 2-methoxy-6-(all-trans-polyprenyl)benzene-1,4-diol + S-adenosyl-L-methionine = a 5-methoxy-2-methyl-3-(all-trans-polyprenyl)benzene-1,4-diol + S-adenosyl-L-homocysteine + H(+). Its pathway is quinol/quinone metabolism; menaquinone biosynthesis; menaquinol from 1,4-dihydroxy-2-naphthoate: step 2/2. The protein operates within cofactor biosynthesis; ubiquinone biosynthesis. Methyltransferase required for the conversion of demethylmenaquinol (DMKH2) to menaquinol (MKH2) and the conversion of 2-polyprenyl-6-methoxy-1,4-benzoquinol (DDMQH2) to 2-polyprenyl-3-methyl-6-methoxy-1,4-benzoquinol (DMQH2). The polypeptide is Ubiquinone/menaquinone biosynthesis C-methyltransferase UbiE (Burkholderia vietnamiensis (strain G4 / LMG 22486) (Burkholderia cepacia (strain R1808))).